The following is a 143-amino-acid chain: Large ribosomal subunit protein uL13 (143 aa).

This sequence belongs to the universal ribosomal protein uL13 family. Part of the 50S ribosomal subunit.

In terms of biological role, this protein is one of the early assembly proteins of the 50S ribosomal subunit, although it is not seen to bind rRNA by itself. It is important during the early stages of 50S assembly. The polypeptide is Large ribosomal subunit protein uL13 (Carboxydothermus hydrogenoformans (strain ATCC BAA-161 / DSM 6008 / Z-2901)).